Consider the following 552-residue polypeptide: E3 ubiquitin-protein ligase MGRN1 (552 aa).

The N-myristoyl glycine moiety is linked to residue Gly2. The segment at Cys278 to Arg317 adopts an RING-type zinc-finger fold. Residues Ser355–Pro384 form a disordered region. The Required for TSG101-binding motif lies at Pro406–Pro409. Tyr411 carries the post-translational modification Phosphotyrosine. Residues Ser439–Glu552 are disordered. Residues Ala450 to Ser460 show a composition bias toward polar residues. Acidic residues predominate over residues Glu464 to Asp475. Position 471 is a phosphoserine (Ser471). A compositionally biased stretch (polar residues) spans Ser504–Ser523. A Phosphoserine modification is found at Ser524.

In terms of assembly, interacts with MC1R and MC4R, but not with TBXA2R. Interacts with TSG101. Interacts with mislocalized cytosolically exposed PRNP; this interaction alters MGRN1 subcellular location and causes lysosomal enlargement. Post-translationally, autoubiquitinated in vitro.

The protein localises to the early endosome. It is found in the cytoplasm. Its subcellular location is the cytosol. It localises to the nucleus. The protein resides in the cell membrane. The enzyme catalyses S-ubiquitinyl-[E2 ubiquitin-conjugating enzyme]-L-cysteine + [acceptor protein]-L-lysine = [E2 ubiquitin-conjugating enzyme]-L-cysteine + N(6)-ubiquitinyl-[acceptor protein]-L-lysine.. It functions in the pathway protein modification; protein ubiquitination. Functionally, E3 ubiquitin-protein ligase. Mediates monoubiquitination at multiple sites of TSG101 in the presence of UBE2D1, but not of UBE2G1, nor UBE2H. Plays a role in the regulation of endosome-to-lysosome trafficking. Impairs MC1R- and MC4R-signaling by competing with GNAS-binding to MCRs and inhibiting agonist-induced cAMP production. Does not inhibit ADRB2-signaling. Does not promote MC1R ubiquitination. Acts also as a negative regulator of hedgehog signaling. The polypeptide is E3 ubiquitin-protein ligase MGRN1 (MGRN1) (Homo sapiens (Human)).